The primary structure comprises 295 residues: Protoheme IX farnesyltransferase (295 aa).

9 helical membrane passes run 31–51 (GLVMITCAGGMWLAPGQIGAA), 54–74 (VLTVLATAVVVGAANALNCYL), 98–118 (FVALGLGIAAPAFAIPILSLA), 121–141 (GLTALLALVALLTYVLVYTPM), 147–167 (TALFVGAVPGAIPPLMGWTSV), 173–193 (AGGLALFGLLFAWQLPHFLAI), 220–240 (LWMALTTILLLPASLALVPLG), 245–265 (GYAITAAVLGLALSAYAISGI), and 273–293 (ARTFFLGTLVHLTVLFVALFL).

Belongs to the UbiA prenyltransferase family. Protoheme IX farnesyltransferase subfamily.

It is found in the cell inner membrane. It catalyses the reaction heme b + (2E,6E)-farnesyl diphosphate + H2O = Fe(II)-heme o + diphosphate. It functions in the pathway porphyrin-containing compound metabolism; heme O biosynthesis; heme O from protoheme: step 1/1. Its function is as follows. Converts heme B (protoheme IX) to heme O by substitution of the vinyl group on carbon 2 of heme B porphyrin ring with a hydroxyethyl farnesyl side group. The polypeptide is Protoheme IX farnesyltransferase (Anaeromyxobacter dehalogenans (strain 2CP-C)).